The sequence spans 855 residues: MSEISKEYNFKEVEEKWIERWDPSVYYFDWGSEKPQYIIDTPPPYPTGNFHIGNALNWCYIDFVARYKRMRGYNVMFPQGWDCHGLPTEVKVEETYHITKNQVPREEFRRLCEEMTAQAIERMRRTITRLGISTDWSNEYITMKPEYYVKTQRSFVQMYEKGMIYREDHPVNWCPRCATAIAFAEVEYDTRTTTLNYMRFESDHGCLEIATTRPELLPACVAVAVNPNDERHIGFVGKSVKVPLFDYEVPVLSDPAVDPSFGTGVVMICTFGDKQDVRWWVEHKLPLRQAIDREGRLTEIAGKFGGMSITEAKKAIVDEMLSRGIIYRQEPLEQNVGLCWRCKTPIEILSERQWFVRIYPDVIIKTADEIEWVPEHMKLRLKNWTGTMEWDWCISRQRVFATPIPAWYCKRCGEVMVAKEEWLPLDPTKTQPPVSCSCGSNEFEPEEDVLDTWMDSSISALHVTGWLSREDPRYPAQLRPQGHDIIRTWAFYTILRSMALVGVKPWETILINGMVLGEDGRKMSKSLNNFVIPEEVFEKNGADALRQWAALGGSPGSDVMFQWKEIVAASRFQQKLWSIYRFAAPFASDTDAPFTQIDRWLLGELGMLVSKVTDAMEAFQFDEAFRAIRAFTWEVLADDYIEIVKSRLYGPDSDERRAAQATLYRVLDVLCRLMAPFIPFITEEIYTSLTGKSVHTQSWPSLETYTSPEGALIREIAAAIRRYKSERGMALNAPLSGIEIYTELELETFDLRGVANAPIQLRKGQPEIESRAVAVKPVMRFIGPRYKDQAGKIIKKLTSMDPADVERMLASGRVEIEGAEITPEMVEIVRETLSMGEAVDVLRLDRATLLIRRSS.

Residues 44-54 carry the 'HIGH' region motif; that stretch reads PYPTGNFHIGN. The 'KMSKS' region motif lies at 522 to 526; that stretch reads KMSKS. Lysine 525 is an ATP binding site.

Belongs to the class-I aminoacyl-tRNA synthetase family. ValS type 2 subfamily.

It is found in the cytoplasm. It catalyses the reaction tRNA(Val) + L-valine + ATP = L-valyl-tRNA(Val) + AMP + diphosphate. Functionally, catalyzes the attachment of valine to tRNA(Val). As ValRS can inadvertently accommodate and process structurally similar amino acids such as threonine, to avoid such errors, it has a 'posttransfer' editing activity that hydrolyzes mischarged Thr-tRNA(Val) in a tRNA-dependent manner. This chain is Valine--tRNA ligase, found in Methanothrix thermoacetophila (strain DSM 6194 / JCM 14653 / NBRC 101360 / PT) (Methanosaeta thermophila).